The chain runs to 261 residues: Nickel import ATP-binding protein NikD (261 aa).

One can recognise an ABC transporter domain in the interval 6–248 (LRIEGLTIAT…PRHDATRALV (243 aa)). ATP is bound at residue 41 to 48 (GASGSGKS).

This sequence belongs to the ABC transporter superfamily. Nickel importer (TC 3.A.1.5.3) family. As to quaternary structure, the complex is composed of two ATP-binding proteins (NikD and NikE), two transmembrane proteins (NikB and NikC) and a solute-binding protein (NikA).

The protein resides in the cell inner membrane. It carries out the reaction Ni(2+)(out) + ATP + H2O = Ni(2+)(in) + ADP + phosphate + H(+). Functionally, part of the ABC transporter complex NikABCDE involved in nickel import. Responsible for energy coupling to the transport system. This chain is Nickel import ATP-binding protein NikD, found in Rhodospirillum rubrum (strain ATCC 11170 / ATH 1.1.1 / DSM 467 / LMG 4362 / NCIMB 8255 / S1).